The primary structure comprises 198 residues: UPF0548 protein DR_2035 (198 aa).

Belongs to the UPF0548 family.

This is UPF0548 protein DR_2035 from Deinococcus radiodurans (strain ATCC 13939 / DSM 20539 / JCM 16871 / CCUG 27074 / LMG 4051 / NBRC 15346 / NCIMB 9279 / VKM B-1422 / R1).